The sequence spans 194 residues: Methylthioribulose-1-phosphate dehydratase (194 aa).

The Zn(2+) site is built by His-84 and His-86.

Belongs to the aldolase class II family. MtnB subfamily. Requires Zn(2+) as cofactor.

It carries out the reaction 5-(methylsulfanyl)-D-ribulose 1-phosphate = 5-methylsulfanyl-2,3-dioxopentyl phosphate + H2O. It participates in amino-acid biosynthesis; L-methionine biosynthesis via salvage pathway; L-methionine from S-methyl-5-thio-alpha-D-ribose 1-phosphate: step 2/6. In terms of biological role, catalyzes the dehydration of methylthioribulose-1-phosphate (MTRu-1-P) into 2,3-diketo-5-methylthiopentyl-1-phosphate (DK-MTP-1-P). This chain is Methylthioribulose-1-phosphate dehydratase, found in Cronobacter sakazakii (Enterobacter sakazakii).